Here is a 160-residue protein sequence, read N- to C-terminus: Transcription elongation factor GreA (160 aa).

The stretch at 1 to 72 forms a coiled coil; it reads MAEKTYVMTL…QIQILETKIR (72 aa).

Belongs to the GreA/GreB family.

Functionally, necessary for efficient RNA polymerase transcription elongation past template-encoded arresting sites. The arresting sites in DNA have the property of trapping a certain fraction of elongating RNA polymerases that pass through, resulting in locked ternary complexes. Cleavage of the nascent transcript by cleavage factors such as GreA or GreB allows the resumption of elongation from the new 3'terminus. GreA releases sequences of 2 to 3 nucleotides. This Streptococcus thermophilus (strain ATCC BAA-491 / LMD-9) protein is Transcription elongation factor GreA.